A 263-amino-acid polypeptide reads, in one-letter code: MNSFYPSRKLGQNFTVDQSVIAKTCRLIKSLNPTALIEVGPGKGALTKALLKLQLPYHGIELDKRLAEYLLVNEILTEEQLTIGDALKQNLDQYFPDTIPLLCGNIPYSISSPLIANFLASKLQQFVLVCQWEFGQRLVAPVNSPNYSAFGVFCQYHLQIKSVFKIDKVAFKPKPQVDSVLMLLKKKPQVAYEAHFGRFLKQCFHQRRKLLVNNLKQLLPPTLLTNVLQQQDLAATVRAQELTPTQLFRLYLSLKPHLSDGKD.

Asn-13, Thr-15, Gly-40, Glu-61, Asp-85, and Asn-105 together coordinate S-adenosyl-L-methionine.

It belongs to the class I-like SAM-binding methyltransferase superfamily. rRNA adenine N(6)-methyltransferase family. RsmA subfamily.

The protein localises to the cytoplasm. It catalyses the reaction adenosine(1518)/adenosine(1519) in 16S rRNA + 4 S-adenosyl-L-methionine = N(6)-dimethyladenosine(1518)/N(6)-dimethyladenosine(1519) in 16S rRNA + 4 S-adenosyl-L-homocysteine + 4 H(+). Specifically dimethylates two adjacent adenosines (A1518 and A1519) in the loop of a conserved hairpin near the 3'-end of 16S rRNA in the 30S particle. May play a critical role in biogenesis of 30S subunits. The sequence is that of Ribosomal RNA small subunit methyltransferase A from Mycoplasma pneumoniae (strain ATCC 29342 / M129 / Subtype 1) (Mycoplasmoides pneumoniae).